We begin with the raw amino-acid sequence, 806 residues long: Conserved oligomeric Golgi complex subunit 6 (806 aa).

The protein belongs to the COG6 family.

The protein localises to the golgi apparatus membrane. Acts as a component of the peripheral membrane COG complex that is involved in intra-Golgi protein trafficking. COG is located at the cis-Golgi, and regulates tethering of retrograde intra-Golgi vesicles and possibly a number of other membrane trafficking events. In Eremothecium gossypii (strain ATCC 10895 / CBS 109.51 / FGSC 9923 / NRRL Y-1056) (Yeast), this protein is Conserved oligomeric Golgi complex subunit 6 (COG6).